A 1098-amino-acid polypeptide reads, in one-letter code: Early transcription factor large subunit homolog (1098 aa).

The Helicase ATP-binding domain maps to 17 to 317; it reads KGGRAFFPCD…PNGQPLQRQQ (301 aa). ATP is bound at residue 64-71; the sequence is WQTGTGKS. The short motif at 246 to 249 is the DEAH box element; sequence DEIH. The 201-residue stretch at 489-689 folds into the Helicase C-terminal domain; it reads MMKDILSIIR…EGDKALRKHA (201 aa).

This sequence belongs to the DEAD box helicase family. DEAH subfamily.

The protein resides in the virion. It carries out the reaction ATP + H2O = ADP + phosphate + H(+). Functionally, putative initation factor. The polypeptide is Early transcription factor large subunit homolog (African swine fever virus (isolate Tick/Malawi/Lil 20-1/1983) (ASFV)).